The chain runs to 504 residues: Glucose-6-phosphate isomerase (504 aa).

Glutamate 333 (proton donor) is an active-site residue. Residues histidine 364 and lysine 473 contribute to the active site.

The protein belongs to the GPI family.

The protein resides in the cytoplasm. The catalysed reaction is alpha-D-glucose 6-phosphate = beta-D-fructose 6-phosphate. The protein operates within carbohydrate biosynthesis; gluconeogenesis. Its pathway is carbohydrate degradation; glycolysis; D-glyceraldehyde 3-phosphate and glycerone phosphate from D-glucose: step 2/4. Catalyzes the reversible isomerization of glucose-6-phosphate to fructose-6-phosphate. The polypeptide is Glucose-6-phosphate isomerase (Xanthomonas oryzae pv. oryzae (strain KACC10331 / KXO85)).